The sequence spans 205 residues: Small ribosomal subunit protein uS4 (205 aa).

The disordered stretch occupies residues 19–45; the sequence is IWGRPKSPVNRREYGPGQHGQRRKGKL. In terms of domain architecture, S4 RNA-binding spans 94–157; sequence SRLDAVVYRA…KQLVIVLEAV (64 aa).

The protein belongs to the universal ribosomal protein uS4 family. Part of the 30S ribosomal subunit. Contacts protein S5. The interaction surface between S4 and S5 is involved in control of translational fidelity.

In terms of biological role, one of the primary rRNA binding proteins, it binds directly to 16S rRNA where it nucleates assembly of the body of the 30S subunit. Its function is as follows. With S5 and S12 plays an important role in translational accuracy. The polypeptide is Small ribosomal subunit protein uS4 (Brucella anthropi (strain ATCC 49188 / DSM 6882 / CCUG 24695 / JCM 21032 / LMG 3331 / NBRC 15819 / NCTC 12168 / Alc 37) (Ochrobactrum anthropi)).